Reading from the N-terminus, the 500-residue chain is Glycerol kinase (500 aa).

T12 contacts ADP. ATP contacts are provided by T12, T13, and S14. Sn-glycerol 3-phosphate is bound at residue T12. R16 serves as a coordination point for ADP. 4 residues coordinate sn-glycerol 3-phosphate: R82, E83, Y135, and D245. Glycerol contacts are provided by R82, E83, Y135, D245, and Q246. ADP contacts are provided by T267 and G310. ATP-binding residues include T267, G310, Q314, and G411. Positions 411 and 415 each coordinate ADP.

Belongs to the FGGY kinase family. Homotetramer and homodimer (in equilibrium).

It catalyses the reaction glycerol + ATP = sn-glycerol 3-phosphate + ADP + H(+). It participates in polyol metabolism; glycerol degradation via glycerol kinase pathway; sn-glycerol 3-phosphate from glycerol: step 1/1. With respect to regulation, activated by phosphorylation and inhibited by fructose 1,6-bisphosphate (FBP). Functionally, key enzyme in the regulation of glycerol uptake and metabolism. Catalyzes the phosphorylation of glycerol to yield sn-glycerol 3-phosphate. This Clostridium perfringens (strain SM101 / Type A) protein is Glycerol kinase.